A 377-amino-acid polypeptide reads, in one-letter code: Spermidine/putrescine import ATP-binding protein PotA (377 aa).

The ABC transporter domain maps to V22–I252. ATP is bound at residue G54–T61.

It belongs to the ABC transporter superfamily. Spermidine/putrescine importer (TC 3.A.1.11.1) family. As to quaternary structure, the complex is composed of two ATP-binding proteins (PotA), two transmembrane proteins (PotB and PotC) and a solute-binding protein (PotD).

It localises to the cell membrane. It catalyses the reaction ATP + H2O + polyamine-[polyamine-binding protein]Side 1 = ADP + phosphate + polyamineSide 2 + [polyamine-binding protein]Side 1.. Its function is as follows. Part of the ABC transporter complex PotABCD involved in spermidine/putrescine import. Responsible for energy coupling to the transport system. This chain is Spermidine/putrescine import ATP-binding protein PotA, found in Rubrobacter xylanophilus (strain DSM 9941 / JCM 11954 / NBRC 16129 / PRD-1).